Reading from the N-terminus, the 68-residue chain is UPF0253 protein ASA_2184 (68 aa).

This sequence belongs to the UPF0253 family.

The polypeptide is UPF0253 protein ASA_2184 (Aeromonas salmonicida (strain A449)).